Reading from the N-terminus, the 569-residue chain is Sulfite reductase [NADPH] hemoprotein beta-component (569 aa).

Positions 434, 440, 479, and 483 each coordinate [4Fe-4S] cluster. Position 483 (cysteine 483) interacts with siroheme.

Belongs to the nitrite and sulfite reductase 4Fe-4S domain family. Alpha(8)-beta(8). The alpha component is a flavoprotein, the beta component is a hemoprotein. Siroheme is required as a cofactor. [4Fe-4S] cluster serves as cofactor.

It catalyses the reaction hydrogen sulfide + 3 NADP(+) + 3 H2O = sulfite + 3 NADPH + 4 H(+). It functions in the pathway sulfur metabolism; hydrogen sulfide biosynthesis; hydrogen sulfide from sulfite (NADPH route): step 1/1. In terms of biological role, component of the sulfite reductase complex that catalyzes the 6-electron reduction of sulfite to sulfide. This is one of several activities required for the biosynthesis of L-cysteine from sulfate. The polypeptide is Sulfite reductase [NADPH] hemoprotein beta-component (Staphylococcus carnosus (strain TM300)).